An 88-amino-acid polypeptide reads, in one-letter code: Cell division topological specificity factor (88 aa).

Belongs to the MinE family.

Prevents the cell division inhibition by proteins MinC and MinD at internal division sites while permitting inhibition at polar sites. This ensures cell division at the proper site by restricting the formation of a division septum at the midpoint of the long axis of the cell. This Salmonella agona (strain SL483) protein is Cell division topological specificity factor.